We begin with the raw amino-acid sequence, 276 residues long: Formamidopyrimidine-DNA glycosylase (276 aa).

Residue Pro-2 is the Schiff-base intermediate with DNA of the active site. The active-site Proton donor is the Glu-3. Lys-58 functions as the Proton donor; for beta-elimination activity in the catalytic mechanism. DNA is bound by residues His-92, Arg-111, and Lys-154. An FPG-type zinc finger spans residues 239-273 (QVYGHAGEECSSCGTILEKIKVNGRGTTFCPHCQV). Residue Arg-263 is the Proton donor; for delta-elimination activity of the active site.

It belongs to the FPG family. Monomer. It depends on Zn(2+) as a cofactor.

It carries out the reaction Hydrolysis of DNA containing ring-opened 7-methylguanine residues, releasing 2,6-diamino-4-hydroxy-5-(N-methyl)formamidopyrimidine.. It catalyses the reaction 2'-deoxyribonucleotide-(2'-deoxyribose 5'-phosphate)-2'-deoxyribonucleotide-DNA = a 3'-end 2'-deoxyribonucleotide-(2,3-dehydro-2,3-deoxyribose 5'-phosphate)-DNA + a 5'-end 5'-phospho-2'-deoxyribonucleoside-DNA + H(+). Involved in base excision repair of DNA damaged by oxidation or by mutagenic agents. Acts as a DNA glycosylase that recognizes and removes damaged bases. Has a preference for oxidized purines, such as 7,8-dihydro-8-oxoguanine (8-oxoG). Has AP (apurinic/apyrimidinic) lyase activity and introduces nicks in the DNA strand. Cleaves the DNA backbone by beta-delta elimination to generate a single-strand break at the site of the removed base with both 3'- and 5'-phosphates. The polypeptide is Formamidopyrimidine-DNA glycosylase (Lactobacillus gasseri (strain ATCC 33323 / DSM 20243 / BCRC 14619 / CIP 102991 / JCM 1131 / KCTC 3163 / NCIMB 11718 / NCTC 13722 / AM63)).